Reading from the N-terminus, the 141-residue chain is Hemoglobin subunit alpha-1/2 (141 aa).

Residues 1 to 141 (VLSPADKTNV…VSTVLTSKYR (141 aa)) enclose the Globin domain. S3 is modified (phosphoserine). K7 bears the N6-succinyllysine mark. T8 carries the phosphothreonine modification. Residue K11 is modified to N6-succinyllysine. An N6-acetyllysine; alternate modification is found at K16. K16 is subject to N6-succinyllysine; alternate. Y24 carries the phosphotyrosine modification. Position 35 is a phosphoserine (S35). K40 is subject to N6-succinyllysine. A Phosphoserine modification is found at S49. H58 is a binding site for O2. H87 lines the heme b pocket. S102 bears the Phosphoserine mark. Residue T108 is modified to Phosphothreonine. S124 and S131 each carry phosphoserine. Residues T134 and T137 each carry the phosphothreonine modification. A Phosphoserine modification is found at S138.

It belongs to the globin family. As to quaternary structure, heterotetramer of two alpha chains and two beta chains. As to expression, red blood cells.

In terms of biological role, involved in oxygen transport from the lung to the various peripheral tissues. The chain is Hemoglobin subunit alpha-1/2 from Macaca speciosa (Stump-tail macaque).